The chain runs to 307 residues: MTETTKTHVILLACGSFNPITKGHIQMFERARDYLHKTGRFIVIGGIVSPVHDSYGKQGLVSSRHRLIMCQLAVQNSDWIRVDPWECYQDTWQTTCSVLEHHRDLMKRVTGCILSNVNTPSMTPVIGQPQHENTQPIYQNSNVPTKPTAAKILGKVGESLGRICCVRPPVERFTFVDENANLGTVMRYEEIELRILLLCGSDLLESFCIPGLWNEADMEVIVGDFGIVVVPRDAADADRIMNHSSILRKYKNNIMVVKDDINHPMSVVSSTKSRLALQHGDGHVVDYLSQPVIDYILKSQLYINASG.

NAD(+)-binding residues include S16 and F17. H24 contacts ATP. The NAD(+) site is built by W92 and T95. 2 S-palmitoyl cysteine lipidation sites follow: C164 and C165. Residues G200, D202, L212, W213, and R232 each contribute to the NAD(+) site. Position 271 to 274 (271 to 274 (TKSR)) interacts with ATP.

It belongs to the eukaryotic NMN adenylyltransferase family. As to quaternary structure, monomer. Requires Mg(2+) as cofactor. Degraded in response to injured neurite. Degradation is caused by polyubiquitination by MYCBP2 after recognition by FBXO45. In terms of processing, palmitoylated; palmitoylation is required for membrane association.

The protein localises to the golgi apparatus membrane. It is found in the cytoplasmic vesicle membrane. Its subcellular location is the cytoplasm. It localises to the cell projection. The protein resides in the axon. It carries out the reaction beta-nicotinamide D-ribonucleotide + ATP + H(+) = diphosphate + NAD(+). It catalyses the reaction nicotinate beta-D-ribonucleotide + ATP + H(+) = deamido-NAD(+) + diphosphate. Its pathway is cofactor biosynthesis; NAD(+) biosynthesis; NAD(+) from nicotinamide D-ribonucleotide: step 1/1. The protein operates within cofactor biosynthesis; NAD(+) biosynthesis; deamido-NAD(+) from nicotinate D-ribonucleotide: step 1/1. Inhibited by P1-(adenosine-5')-P3-(nicotinamide-riboside-5')-triphosphate (Np3AD) and P1-(adenosine-5')-P4-(nicotinamide-riboside-5')-tetraphosphate (Np4AD). Its function is as follows. Nicotinamide/nicotinate-nucleotide adenylyltransferase that acts as an axon maintenance factor. Axon survival factor required for the maintenance of healthy axons: acts by delaying Wallerian axon degeneration, an evolutionarily conserved process that drives the loss of damaged axons. Catalyzes the formation of NAD(+) from nicotinamide mononucleotide (NMN) and ATP. Can also use the deamidated form; nicotinic acid mononucleotide (NaMN) as substrate but with a lower efficiency. Cannot use triazofurin monophosphate (TrMP) as substrate. Also catalyzes the reverse reaction, i.e. the pyrophosphorolytic cleavage of NAD(+). For the pyrophosphorolytic activity prefers NAD(+), NADH and NaAD as substrates and degrades nicotinic acid adenine dinucleotide phosphate (NHD) less effectively. Fails to cleave phosphorylated dinucleotides NADP(+), NADPH and NaADP(+). Also acts as an activator of ADP-ribosylation by supporting the catalytic activity of PARP16 and promoting mono-ADP-ribosylation of ribosomes by PARP16. May be involved in the maintenance of axonal integrity. The chain is Nicotinamide/nicotinic acid mononucleotide adenylyltransferase 2 (Nmnat2) from Rattus norvegicus (Rat).